We begin with the raw amino-acid sequence, 342 residues long: Renalase (342 aa).

The signal sequence occupies residues M1–A17. Residues T12, R42, and Q61 to Y62 contribute to the FAD site.

It belongs to the renalase family. FAD is required as a cofactor. In terms of tissue distribution, secreted into the blood by the kidney. Highly expressed in the kidney, expressed at lower level in heart, skeletal muscle and small intestine. Its plasma concentration is markedly reduced in patients with end-stage renal disease, as compared with healthy subjects.

The protein localises to the secreted. The enzyme catalyses 1,2-dihydro-beta-NAD + O2 + H(+) = H2O2 + NAD(+). It catalyses the reaction 1,2-dihydro-beta-NADP + O2 + H(+) = H2O2 + NADP(+). It carries out the reaction 1,6-dihydro-beta-NADP + O2 + H(+) = H2O2 + NADP(+). The catalysed reaction is 1,6-dihydro-beta-NAD + O2 + H(+) = H2O2 + NAD(+). Functionally, catalyzes the oxidation of the less abundant 1,2-dihydro-beta-NAD(P) and 1,6-dihydro-beta-NAD(P) to form beta-NAD(P)(+). The enzyme hormone is secreted by the kidney, and circulates in blood and modulates cardiac function and systemic blood pressure. Lowers blood pressure in vivo by decreasing cardiac contractility and heart rate and preventing a compensatory increase in peripheral vascular tone, suggesting a causal link to the increased plasma catecholamine and heightened cardiovascular risk. High concentrations of catecholamines activate plasma renalase and promotes its secretion and synthesis. The protein is Renalase (RNLS) of Homo sapiens (Human).